We begin with the raw amino-acid sequence, 361 residues long: Solute carrier family 25 member 3 (361 aa).

The N-terminal 49 residues, 1–49 (MFSSVAHLARANPFNTPHLQLVHDGLGDFRSRPPGPTGQPRRPRNLAAA), are a transit peptide targeting the mitochondrion. Residues 25-44 (GLGDFRSRPPGPTGQPRRPR) form a disordered region. Residues 50–62 (AVEEYSCEFGSAK) lie on the Mitochondrial intermembrane side of the membrane. 3 Solcar repeats span residues 62–146 (KYYA…FKVL), 159–243 (WRTS…TVEA), and 260–338 (EQLV…VKVY). Residues 63-85 (YYALCGFGGVLSCGLTHTAVVPL) form a helical membrane-spanning segment. Residues 86 to 120 (DLVKCRMQVDPQKYKGIFNGFSVTLKEDGVRGLAK) are Mitochondrial matrix-facing. Lys98 is modified (N6-acetyllysine). Position 111 is an N6-methyllysine (Lys111). The chain crosses the membrane as a helical span at residues 121–140 (GWAPTFLGYSMQGLCKFGFY). Over 141-160 (EVFKVLYSNMLGEENTYLWR) the chain is Mitochondrial intermembrane. A helical transmembrane segment spans residues 161–182 (TSLYLAASASAEFFADIALAPM). Residues 183-217 (EAAKVRIQTQPGYANTLRDAAPKMYKEEGLKAFYK) lie on the Mitochondrial matrix side of the membrane. Tyr195 bears the Phosphotyrosine mark. Residue Lys208 is modified to N6-acetyllysine. The chain crosses the membrane as a helical span at residues 218–237 (GVAPLWMRQIPYTMMKFACF). Residues 238 to 260 (ERTVEALYKFVVPKPRSECSKPE) lie on the Mitochondrial intermembrane side of the membrane. Residues 261–283 (QLVVTFVAGYIAGVFCAIVSHPA) traverse the membrane as a helical segment. At 284–313 (DSVVSVLNKEKGSSASLVLKRLGFKGVWKG) the chain is on the mitochondrial matrix side. A helical transmembrane segment spans residues 314-332 (LFARIIMIGTLTALQWFIY). The Mitochondrial intermembrane portion of the chain corresponds to 333-361 (DSVKVYFRLPRPPPPEMPESLKKKLGLTQ).

It belongs to the mitochondrial carrier (TC 2.A.29) family. In terms of assembly, interacts with PPIF; the interaction is impaired by CsA.

Its subcellular location is the mitochondrion inner membrane. The catalysed reaction is phosphate(in) + H(+)(in) = phosphate(out) + H(+)(out). Functionally, inorganic ion transporter that transports phosphate or copper ions across the mitochondrial inner membrane into the matrix compartment. Mediates proton-coupled symport of phosphate ions necessary for mitochondrial oxidative phosphorylation of ADP to ATP. Transports copper ions probably in the form of anionic copper(I) complexes to maintain mitochondrial matrix copper pool and to supply copper for cytochrome C oxidase complex assembly. May also play a role in regulation of the mitochondrial permeability transition pore (mPTP). This Pongo abelii (Sumatran orangutan) protein is Solute carrier family 25 member 3.